A 206-amino-acid chain; its full sequence is Large ribosomal subunit protein bL25 (206 aa).

The interval aspartate 168–lysine 206 is disordered. A compositionally biased stretch (low complexity) spans glutamate 184–lysine 206.

The protein belongs to the bacterial ribosomal protein bL25 family. CTC subfamily. Part of the 50S ribosomal subunit; part of the 5S rRNA/L5/L18/L25 subcomplex. Contacts the 5S rRNA. Binds to the 5S rRNA independently of L5 and L18.

This is one of the proteins that binds to the 5S RNA in the ribosome where it forms part of the central protuberance. This Bifidobacterium longum (strain DJO10A) protein is Large ribosomal subunit protein bL25.